Consider the following 492-residue polypeptide: NADH-quinone oxidoreductase subunit N (492 aa).

Helical transmembrane passes span Leu-16–Phe-36, Leu-44–Gly-64, Ile-81–Met-101, Gly-111–Ser-131, Leu-134–Leu-154, Phe-168–Ala-188, Ile-210–Val-230, Asn-244–Ile-264, Ala-276–Ile-296, Met-306–Thr-326, Val-332–Trp-352, Leu-382–Phe-402, Ile-423–Phe-443, and Phe-463–Leu-483.

Belongs to the complex I subunit 2 family. NDH-1 is composed of 14 different subunits. Subunits NuoA, H, J, K, L, M, N constitute the membrane sector of the complex.

It is found in the cell inner membrane. It catalyses the reaction a quinone + NADH + 5 H(+)(in) = a quinol + NAD(+) + 4 H(+)(out). In terms of biological role, NDH-1 shuttles electrons from NADH, via FMN and iron-sulfur (Fe-S) centers, to quinones in the respiratory chain. The immediate electron acceptor for the enzyme in this species is believed to be ubiquinone. Couples the redox reaction to proton translocation (for every two electrons transferred, four hydrogen ions are translocated across the cytoplasmic membrane), and thus conserves the redox energy in a proton gradient. The sequence is that of NADH-quinone oxidoreductase subunit N from Helicobacter hepaticus (strain ATCC 51449 / 3B1).